Here is a 1189-residue protein sequence, read N- to C-terminus: Disabled homolog 2-interacting protein (1189 aa).

Positions 1 to 75 (MSAGGSARKS…EPSAATPFRV (75 aa)) are disordered. A compositionally biased stretch (basic residues) spans 20–38 (LLRRPRLQRQRSRSRSRTR). A compositionally biased stretch (basic and acidic residues) spans 39-49 (PARESPQERPG). The PH domain occupies 101–202 (SFRHILPGFR…WMENLRRAVH (102 aa)). The C2 domain occupies 193–311 (WMENLRRAVH…AGRQFVEKWY (119 aa)). Positions 387–595 (GKVKDFLTDL…TNMQRFLLEI (209 aa)) constitute a Ras-GAP domain. Positions 646 to 943 (LRDVHTALST…RTPPNLLSTL (298 aa)) are necessary for interaction with AKT1. A compositionally biased stretch (polar residues) spans 653–668 (LSTPGSGQLPGTNDLA). Disordered stretches follow at residues 653-678 (LSTPGSGQLPGTNDLASTPGSGSSSI) and 715-742 (RSSGVQPSPARSSSYSEANEPDLQMANG). The span at 669–678 (STPGSGSSSI) shows a compositional bias: low complexity. Positions 715-731 (RSSGVQPSPARSSSYSE) are enriched in polar residues. At Ser-728 the chain carries Phosphoserine; by MAP3K5 and RIPK1. Position 747 is a phosphoserine (Ser-747). Disordered stretches follow at residues 803-823 (AGQTPTTPGTSEGAPGRPQLL), 843-865 (PRGLGDSGSEGHSSLSSHSNSEE), 895-998 (SLTE…SPNA), 1015-1035 (EDEGLGPDPPHRDRLRSKDEL), and 1164-1189 (RNGISPTNPTKLQITENGEFRNSSNC). Positions 852-865 (EGHSSLSSHSNSEE) are enriched in low complexity. Positions 919–931 (QPPPPPPPPPPAP) are enriched in pro residues. Polar residues-rich tracts occupy residues 938–955 (NLLSTLQYPRPSSGTLAS) and 966–976 (RLRQQSSSSKG). Phosphoserine occurs at positions 978 and 995. Residues 1023–1035 (PPHRDRLRSKDEL) are compositionally biased toward basic and acidic residues. The stretch at 1026 to 1159 (RDRLRSKDEL…SALTQLKERY (134 aa)) forms a coiled coil.

In terms of assembly, on plasma membrane, exists in an inactive form complexed with TNFR1; in response to TNF-alpha, dissociates from TNFR1 complex, translocates to cytoplasm and forms part of an intracellular signaling complex comprising TRADD, RIPK1, TRAF2 and MAP3K5. Interacts with DAB1. Interacts (via NPXY motif) with DAB2 (via PID domain). Interacts (via PH domain) with ERN1. Part of a cytoplasmic complex made of HIPK1, DAB2IP and MAP3K5 in response to TNF-alpha; this complex formation promotes MAP3K5-JNK activation and subsequent apoptosis. Interacts (via N-terminal domain) with JAK2; the interaction occurs in a IFNG/IFN-gamma-dependent manner and inhibits JAK2 autophosphorylation activity. Interacts (via C2 domain) with GSK3B; the interaction stimulates GSK3B kinase activation. Interacts (via C2 domain) with PPP2CA. Interacts (via proline-rich motif) with a regulatory p85 subunit (via SH3 domain) of the PI3K complex; the interaction inhibits the PI3K-AKT complex activity in a TNF-alpha-dependent manner in prostate cancer (PCa) cells. Interacts with AKT1; the interaction is increased in a TNF-alpha-induced manner. Interacts (via C2 domain and active form preferentially) with KDR/VEGFR2 (tyrosine-phosphorylated active form preferentially); the interaction occurs at the late phase of VEGFA response and inhibits KDR/VEGFR2 activity. Interacts (via N-terminus C2 domain) with MAP3K5 ('Ser-966' dephosphorylated form preferentially); the interaction occurs in a TNF-alpha-induced manner. Interacts (via Ras-GAP domain) with the catalytic subunit of protein phosphatase PP2A; the interaction occurs in resting endothelial cells, is further enhanced by TNF-alpha stimulation and is required to bridge PP2A to MAP3K5. Interacts (via C-terminus PER domain) with TRAF2 (via zinc fingers); the interaction occurs in a TNF-alpha-dependent manner. Interacts with 14-3-3 proteins; the interaction occurs in a TNF-alpha-dependent manner. Interacts (via Ras-GAP domain) with RIPK1 (via kinase domain); the interaction occurs in a TNF-alpha-dependent manner. Interacts with RAB40C; acts as a GAP for RAB40C. In terms of processing, in response to TNF-alpha-induction, phosphorylated at Ser-728; phosphorylation leads to a conformational change, and thus, increases its association with 14-3-3 proteins, MAP3K5, RIPK1 and TRAF2 in endothelial cells; also stimulates regulatory p85 subunit sequestring and PI3K-p85 complex activity inhibition. As to expression, expressed in endothelial and vascular smooth muscle cells (VSMCs). Expressed in prostate epithelial but poorly in prostate cancer cells. Poorly expressed in medulloblastoma cells compared to cerebellar precursor proliferating progenitor cells (at protein level). Low expression in prostate. Down-regulated in prostate cancer.

The protein resides in the cytoplasm. Its subcellular location is the cell membrane. It is found in the membrane. It localises to the cell projection. The protein localises to the dendrite. Functionally, functions as a scaffold protein implicated in the regulation of a large spectrum of both general and specialized signaling pathways. Involved in several processes such as innate immune response, inflammation and cell growth inhibition, apoptosis, cell survival, angiogenesis, cell migration and maturation. Also plays a role in cell cycle checkpoint control; reduces G1 phase cyclin levels resulting in G0/G1 cell cycle arrest. Mediates signal transduction by receptor-mediated inflammatory signals, such as the tumor necrosis factor (TNF), interferon (IFN) or lipopolysaccharide (LPS). Modulates the balance between phosphatidylinositol 3-kinase (PI3K)-AKT-mediated cell survival and apoptosis stimulated kinase (MAP3K5)-JNK signaling pathways; sequesters both AKT1 and MAP3K5 and counterbalances the activity of each kinase by modulating their phosphorylation status in response to pro-inflammatory stimuli. Acts as a regulator of the endoplasmic reticulum (ER) unfolded protein response (UPR) pathway; specifically involved in transduction of the ER stress-response to the JNK cascade through ERN1. Mediates TNF-alpha-induced apoptosis activation by facilitating dissociation of inhibitor 14-3-3 from MAP3K5; recruits the PP2A phosphatase complex which dephosphorylates MAP3K5 on 'Ser-966', leading to the dissociation of 13-3-3 proteins and activation of the MAP3K5-JNK signaling pathway in endothelial cells. Also mediates TNF/TRAF2-induced MAP3K5-JNK activation, while it inhibits CHUK-NF-kappa-B signaling. Acts a negative regulator in the IFN-gamma-mediated JAK-STAT signaling cascade by inhibiting smooth muscle cell (VSMCs) proliferation and intimal expansion, and thus, prevents graft arteriosclerosis (GA). Acts as a GTPase-activating protein (GAP) for the ADP ribosylation factor 6 (ARF6), Ras and RAB40C. Promotes hydrolysis of the ARF6-bound GTP and thus, negatively regulates phosphatidylinositol 4,5-bisphosphate (PIP2)-dependent TLR4-TIRAP-MyD88 and NF-kappa-B signaling pathways in endothelial cells in response to lipopolysaccharides (LPS). Binds specifically to phosphatidylinositol 4-phosphate (PtdIns4P) and phosphatidylinositol 3-phosphate (PtdIns3P). In response to vascular endothelial growth factor (VEGFA), acts as a negative regulator of the VEGFR2-PI3K-mediated angiogenic signaling pathway by inhibiting endothelial cell migration and tube formation. In the developing brain, promotes both the transition from the multipolar to the bipolar stage and the radial migration of cortical neurons from the ventricular zone toward the superficial layer of the neocortex in a glial-dependent locomotion process. Probable downstream effector of the Reelin signaling pathway; promotes Purkinje cell (PC) dendrites development and formation of cerebellar synapses. Also functions as a tumor suppressor protein in prostate cancer progression; prevents cell proliferation and epithelial-to-mesenchymal transition (EMT) through activation of the glycogen synthase kinase-3 beta (GSK3B)-induced beta-catenin and inhibition of PI3K-AKT and Ras-MAPK survival downstream signaling cascades, respectively. This chain is Disabled homolog 2-interacting protein, found in Homo sapiens (Human).